The primary structure comprises 220 residues: Pyridoxine/pyridoxamine 5'-phosphate oxidase (220 aa).

Substrate contacts are provided by residues 13–16 (RVEY) and lysine 77. FMN-binding positions include 72–77 (RTVLCK), 87–88 (FT), lysine 94, and glutamine 116. Tyrosine 134, arginine 138, and serine 142 together coordinate substrate. Residues 151–152 (QS) and tryptophan 197 contribute to the FMN site. Residue 203-205 (RVH) participates in substrate binding. Arginine 207 contributes to the FMN binding site.

Belongs to the pyridoxamine 5'-phosphate oxidase family. As to quaternary structure, homodimer. The cofactor is FMN.

The catalysed reaction is pyridoxamine 5'-phosphate + O2 + H2O = pyridoxal 5'-phosphate + H2O2 + NH4(+). It catalyses the reaction pyridoxine 5'-phosphate + O2 = pyridoxal 5'-phosphate + H2O2. Its pathway is cofactor metabolism; pyridoxal 5'-phosphate salvage; pyridoxal 5'-phosphate from pyridoxamine 5'-phosphate: step 1/1. It participates in cofactor metabolism; pyridoxal 5'-phosphate salvage; pyridoxal 5'-phosphate from pyridoxine 5'-phosphate: step 1/1. Its function is as follows. Catalyzes the oxidation of either pyridoxine 5'-phosphate (PNP) or pyridoxamine 5'-phosphate (PMP) into pyridoxal 5'-phosphate (PLP). In Mycobacterium sp. (strain KMS), this protein is Pyridoxine/pyridoxamine 5'-phosphate oxidase.